Consider the following 450-residue polypeptide: tRNA-2-methylthio-N(6)-dimethylallyladenosine synthase (450 aa).

One can recognise an MTTase N-terminal domain in the interval 2 to 119 (KKVFVKTYGC…LPDLIARRQR (118 aa)). Positions 11, 48, 82, 156, 160, and 163 each coordinate [4Fe-4S] cluster. The region spanning 142–375 (RVEGPSAFVS…QATIEENVQR (234 aa)) is the Radical SAM core domain. Residues 378-448 (QNMVGTVQRI…PHSLRGEIVV (71 aa)) form the TRAM domain.

Belongs to the methylthiotransferase family. MiaB subfamily. Monomer. It depends on [4Fe-4S] cluster as a cofactor.

It is found in the cytoplasm. It carries out the reaction N(6)-dimethylallyladenosine(37) in tRNA + (sulfur carrier)-SH + AH2 + 2 S-adenosyl-L-methionine = 2-methylsulfanyl-N(6)-dimethylallyladenosine(37) in tRNA + (sulfur carrier)-H + 5'-deoxyadenosine + L-methionine + A + S-adenosyl-L-homocysteine + 2 H(+). Functionally, catalyzes the methylthiolation of N6-(dimethylallyl)adenosine (i(6)A), leading to the formation of 2-methylthio-N6-(dimethylallyl)adenosine (ms(2)i(6)A) at position 37 in tRNAs that read codons beginning with uridine. This chain is tRNA-2-methylthio-N(6)-dimethylallyladenosine synthase, found in Cupriavidus necator (strain ATCC 17699 / DSM 428 / KCTC 22496 / NCIMB 10442 / H16 / Stanier 337) (Ralstonia eutropha).